Here is a 323-residue protein sequence, read N- to C-terminus: Acetyl-coenzyme A carboxylase carboxyl transferase subunit alpha (323 aa).

The 255-residue stretch at 39-293 (RLSKKSQQLT…RRALADSLRQ (255 aa)) folds into the CoA carboxyltransferase C-terminal domain.

Belongs to the AccA family. Acetyl-CoA carboxylase is a heterohexamer composed of biotin carboxyl carrier protein (AccB), biotin carboxylase (AccC) and two subunits each of ACCase subunit alpha (AccA) and ACCase subunit beta (AccD).

The protein resides in the cytoplasm. The catalysed reaction is N(6)-carboxybiotinyl-L-lysyl-[protein] + acetyl-CoA = N(6)-biotinyl-L-lysyl-[protein] + malonyl-CoA. It participates in lipid metabolism; malonyl-CoA biosynthesis; malonyl-CoA from acetyl-CoA: step 1/1. Its function is as follows. Component of the acetyl coenzyme A carboxylase (ACC) complex. First, biotin carboxylase catalyzes the carboxylation of biotin on its carrier protein (BCCP) and then the CO(2) group is transferred by the carboxyltransferase to acetyl-CoA to form malonyl-CoA. The sequence is that of Acetyl-coenzyme A carboxylase carboxyl transferase subunit alpha from Paraburkholderia phytofirmans (strain DSM 17436 / LMG 22146 / PsJN) (Burkholderia phytofirmans).